The following is a 401-amino-acid chain: Canavanine gamma-lyase (401 aa).

K214 is modified (N6-(pyridoxal phosphate)lysine).

It belongs to the trans-sulfuration enzymes family. The cofactor is pyridoxal 5'-phosphate.

It carries out the reaction L-canavanine + H2O = N-hydroxyguanidine + L-homoserine. Its function is as follows. Lyase involved in the degradation of canavanine, the delta-oxa-analog of arginine, allowing growth on canavanine as sole nitrogen and carbon source. Catalyzes the elimination of hydroxyguanidine from canavanine with a subsequent water addition to yield homoserine. The chain is Canavanine gamma-lyase from Rhizobium leguminosarum bv. trifolii (strain WSM2304).